The following is a 352-amino-acid chain: 3-isopropylmalate dehydrogenase (352 aa).

Residues arginine 91, arginine 101, arginine 129, and aspartate 218 each contribute to the substrate site. Residues aspartate 218, aspartate 242, and aspartate 246 each contribute to the Mg(2+) site. 281 to 293 (GSAPDIAGKGLAN) is a binding site for NAD(+).

This sequence belongs to the isocitrate and isopropylmalate dehydrogenases family. LeuB type 1 subfamily. In terms of assembly, homodimer. It depends on Mg(2+) as a cofactor. Mn(2+) is required as a cofactor.

It is found in the cytoplasm. It carries out the reaction (2R,3S)-3-isopropylmalate + NAD(+) = 4-methyl-2-oxopentanoate + CO2 + NADH. Its pathway is amino-acid biosynthesis; L-leucine biosynthesis; L-leucine from 3-methyl-2-oxobutanoate: step 3/4. In terms of biological role, catalyzes the oxidation of 3-carboxy-2-hydroxy-4-methylpentanoate (3-isopropylmalate) to 3-carboxy-4-methyl-2-oxopentanoate. The product decarboxylates to 4-methyl-2 oxopentanoate. The polypeptide is 3-isopropylmalate dehydrogenase (Novosphingobium aromaticivorans (strain ATCC 700278 / DSM 12444 / CCUG 56034 / CIP 105152 / NBRC 16084 / F199)).